The primary structure comprises 316 residues: Olfactory receptor 5P79 (316 aa).

The Extracellular segment spans residues 1–28 (MGILKDGNHTAVTEFILLGLTDDPVLKV). Asn8 is a glycosylation site (N-linked (GlcNAc...) asparagine). Residues 29-49 (VLFTIILCIYLVTVSGNLSTI) form a helical membrane-spanning segment. Residues 50–57 (LLIRVSSQ) are Cytoplasmic-facing. Residues 58-78 (LHHPMYFFLSHLASVDIGISS) form a helical membrane-spanning segment. Over 79–102 (SVTPNMLVNFLLERSTISYLGCGI) the chain is Extracellular. A disulfide bond links Cys100 and Cys192. A helical transmembrane segment spans residues 103-123 (QLGSGAFFGSTESFLLAAMAY). Over 124-136 (DHFMAICNPLLYS) the chain is Cytoplasmic. Residues 137–157 (TKMSTQVCIQLLVGSYIGGFL) traverse the membrane as a helical segment. The Extracellular portion of the chain corresponds to 158–199 (NASSFILSFFSFLFCGPNKVNHFFCDFTPLVELSCSDNSVLL). Residues 200–220 (ILDSFSAGSIIVITVLVIAIS) traverse the membrane as a helical segment. At 221–240 (YTYILITILKMHSTEGRHKA) the chain is on the cytoplasmic side. Residues 241-261 (FSTCTSHLTAVTVFYGTVTFI) form a helical membrane-spanning segment. Residues 262–274 (YVMPKSSYSTDQN) lie on the Extracellular side of the membrane. A helical transmembrane segment spans residues 275–297 (KVLSVFYMIAIAIPMLNPLIYSL). Residues 298-316 (RNNEIKNALKRQLSKKTFS) are Cytoplasmic-facing.

Belongs to the G-protein coupled receptor 1 family.

It is found in the cell membrane. In terms of biological role, potential odorant receptor. The protein is Olfactory receptor 5P79 of Mus musculus (Mouse).